The chain runs to 382 residues: UDP-N-acetylglucosamine--N-acetylmuramyl-(pentapeptide) pyrophosphoryl-undecaprenol N-acetylglucosamine transferase (382 aa).

Residues threonine 22–glycine 24, asparagine 134, arginine 186, serine 212, alanine 285–glutamate 290, and glutamine 311 each bind UDP-N-acetyl-alpha-D-glucosamine.

It belongs to the glycosyltransferase 28 family. MurG subfamily.

It is found in the cell inner membrane. It catalyses the reaction di-trans,octa-cis-undecaprenyl diphospho-N-acetyl-alpha-D-muramoyl-L-alanyl-D-glutamyl-meso-2,6-diaminopimeloyl-D-alanyl-D-alanine + UDP-N-acetyl-alpha-D-glucosamine = di-trans,octa-cis-undecaprenyl diphospho-[N-acetyl-alpha-D-glucosaminyl-(1-&gt;4)]-N-acetyl-alpha-D-muramoyl-L-alanyl-D-glutamyl-meso-2,6-diaminopimeloyl-D-alanyl-D-alanine + UDP + H(+). The protein operates within cell wall biogenesis; peptidoglycan biosynthesis. Cell wall formation. Catalyzes the transfer of a GlcNAc subunit on undecaprenyl-pyrophosphoryl-MurNAc-pentapeptide (lipid intermediate I) to form undecaprenyl-pyrophosphoryl-MurNAc-(pentapeptide)GlcNAc (lipid intermediate II). This chain is UDP-N-acetylglucosamine--N-acetylmuramyl-(pentapeptide) pyrophosphoryl-undecaprenol N-acetylglucosamine transferase, found in Pseudoalteromonas atlantica (strain T6c / ATCC BAA-1087).